Consider the following 276-residue polypeptide: Phosphatidylcholine synthase (276 aa).

Residues 1-30 (MGGQKEMADSVKTKLTGKLKAKKVTAPQAK) lie on the Cytoplasmic side of the membrane. Residues 31-51 (AFSVHLLTASGSFLAFLSVVA) traverse the membrane as a helical segment. Topologically, residues 52 to 57 (ASDGRY) are periplasmic. A helical membrane pass occupies residues 58 to 78 (TAMWWWLGLALFVDGIDGPIA). At 79 to 91 (RKLEVKYVLPNWS) the chain is on the cytoplasmic side. Residues 92–112 (GELLDSIIDYVTYVLIPAFAL) traverse the membrane as a helical segment. Over 113–115 (YQS) the chain is Periplasmic. Residues 116 to 136 (GFMGTNLSFISGAIIVVSSAI) traverse the membrane as a helical segment. Residues 137 to 146 (YYADTGMKTK) lie on the Cytoplasmic side of the membrane. The helical transmembrane segment at 147–167 (ENFFKGFPVVWNMVVFTLFIV) threads the bilayer. Residues 168-171 (RPGE) lie on the Periplasmic side of the membrane. The helical transmembrane segment at 172–192 (WVAFGTVVASAILSFLPINFL) threads the bilayer. The Cytoplasmic segment spans residues 193–202 (HPVRVVRLRP). Residues 203 to 223 (LNLTIFLLWCAFGVIALYYML) form a helical membrane-spanning segment. Topologically, residues 224 to 230 (DAPLWVR) are periplasmic. A helical membrane pass occupies residues 231-251 (IGISVTGLYIYFIGAIMQLFP). Residues 252–276 (SLGREAALAKARKLVEKQQKSGEAP) lie on the Cytoplasmic side of the membrane.

It belongs to the CDP-alcohol phosphatidyltransferase class-I family. It depends on Mn(2+) as a cofactor.

The protein resides in the cell inner membrane. The catalysed reaction is a CDP-1,2-diacyl-sn-glycerol + choline = a 1,2-diacyl-sn-glycero-3-phosphocholine + CMP + H(+). Condenses choline with CDP-diglyceride to produce phosphatidylcholine and CMP. The polypeptide is Phosphatidylcholine synthase (Brucella melitensis biotype 1 (strain ATCC 23456 / CCUG 17765 / NCTC 10094 / 16M)).